A 300-amino-acid chain; its full sequence is tRNA dimethylallyltransferase (300 aa).

ATP is bound at residue 11–18; that stretch reads GPTAVGKS. 13–18 provides a ligand contact to substrate; sequence TAVGKS. Residues 35–38 are interaction with substrate tRNA; that stretch reads DSIQ.

The protein belongs to the IPP transferase family. In terms of assembly, monomer. Requires Mg(2+) as cofactor.

The enzyme catalyses adenosine(37) in tRNA + dimethylallyl diphosphate = N(6)-dimethylallyladenosine(37) in tRNA + diphosphate. Catalyzes the transfer of a dimethylallyl group onto the adenine at position 37 in tRNAs that read codons beginning with uridine, leading to the formation of N6-(dimethylallyl)adenosine (i(6)A). This Borrelia turicatae (strain 91E135) protein is tRNA dimethylallyltransferase.